The sequence spans 164 residues: Pleckstrin homology domain-containing family J member 1 (164 aa).

The region spanning 15-108 (PAEMAAELGM…WMEALQRASY (94 aa)) is the PH domain.

The protein is Pleckstrin homology domain-containing family J member 1 (Plekhj1) of Mus musculus (Mouse).